Here is a 369-residue protein sequence, read N- to C-terminus: Anhydro-N-acetylmuramic acid kinase (369 aa).

12–19 is an ATP binding site; it reads GTSMDGVD.

It belongs to the anhydro-N-acetylmuramic acid kinase family.

It catalyses the reaction 1,6-anhydro-N-acetyl-beta-muramate + ATP + H2O = N-acetyl-D-muramate 6-phosphate + ADP + H(+). It functions in the pathway amino-sugar metabolism; 1,6-anhydro-N-acetylmuramate degradation. It participates in cell wall biogenesis; peptidoglycan recycling. Catalyzes the specific phosphorylation of 1,6-anhydro-N-acetylmuramic acid (anhMurNAc) with the simultaneous cleavage of the 1,6-anhydro ring, generating MurNAc-6-P. Is required for the utilization of anhMurNAc either imported from the medium or derived from its own cell wall murein, and thus plays a role in cell wall recycling. The sequence is that of Anhydro-N-acetylmuramic acid kinase from Shewanella baltica (strain OS223).